Here is a 320-residue protein sequence, read N- to C-terminus: Elongation factor Ts (320 aa).

The involved in Mg(2+) ion dislocation from EF-Tu stretch occupies residues 82–85; that stretch reads TDFV.

This sequence belongs to the EF-Ts family.

The protein localises to the cytoplasm. Functionally, associates with the EF-Tu.GDP complex and induces the exchange of GDP to GTP. It remains bound to the aminoacyl-tRNA.EF-Tu.GTP complex up to the GTP hydrolysis stage on the ribosome. In Flavobacterium johnsoniae (strain ATCC 17061 / DSM 2064 / JCM 8514 / BCRC 14874 / CCUG 350202 / NBRC 14942 / NCIMB 11054 / UW101) (Cytophaga johnsonae), this protein is Elongation factor Ts.